The primary structure comprises 476 residues: 3-isopropylmalate dehydratase large subunit (476 aa).

[4Fe-4S] cluster is bound by residues C353, C413, and C416.

This sequence belongs to the aconitase/IPM isomerase family. LeuC type 1 subfamily. Heterodimer of LeuC and LeuD. [4Fe-4S] cluster serves as cofactor.

The catalysed reaction is (2R,3S)-3-isopropylmalate = (2S)-2-isopropylmalate. It functions in the pathway amino-acid biosynthesis; L-leucine biosynthesis; L-leucine from 3-methyl-2-oxobutanoate: step 2/4. Its function is as follows. Catalyzes the isomerization between 2-isopropylmalate and 3-isopropylmalate, via the formation of 2-isopropylmaleate. The protein is 3-isopropylmalate dehydratase large subunit of Photobacterium profundum (strain SS9).